Reading from the N-terminus, the 201-residue chain is Dephospho-CoA kinase (201 aa).

The region spanning 3-201 (VIGLTGGIAS…WKERIEKNPR (199 aa)) is the DPCK domain. Residue 11-16 (ASGKST) participates in ATP binding.

It belongs to the CoaE family.

The protein localises to the cytoplasm. It catalyses the reaction 3'-dephospho-CoA + ATP = ADP + CoA + H(+). It functions in the pathway cofactor biosynthesis; coenzyme A biosynthesis; CoA from (R)-pantothenate: step 5/5. Catalyzes the phosphorylation of the 3'-hydroxyl group of dephosphocoenzyme A to form coenzyme A. The protein is Dephospho-CoA kinase of Geobacter metallireducens (strain ATCC 53774 / DSM 7210 / GS-15).